Consider the following 204-residue polypeptide: Guanylate kinase (204 aa).

The Guanylate kinase-like domain occupies 5–184 (GLLLVLSGPS…AVNHIKAIVD (180 aa)). 12–19 (GPSGVGKG) serves as a coordination point for ATP.

It belongs to the guanylate kinase family.

It localises to the cytoplasm. It carries out the reaction GMP + ATP = GDP + ADP. Functionally, essential for recycling GMP and indirectly, cGMP. The chain is Guanylate kinase from Lactobacillus delbrueckii subsp. bulgaricus (strain ATCC 11842 / DSM 20081 / BCRC 10696 / JCM 1002 / NBRC 13953 / NCIMB 11778 / NCTC 12712 / WDCM 00102 / Lb 14).